The chain runs to 424 residues: Serine--tRNA ligase (424 aa).

229–231 contributes to the L-serine binding site; that stretch reads TAE. 260 to 262 contacts ATP; sequence RRE. E283 serves as a coordination point for L-serine. 347-350 lines the ATP pocket; it reads EVSS. Residue S383 coordinates L-serine.

This sequence belongs to the class-II aminoacyl-tRNA synthetase family. Type-1 seryl-tRNA synthetase subfamily. Homodimer. The tRNA molecule binds across the dimer.

It is found in the cytoplasm. It catalyses the reaction tRNA(Ser) + L-serine + ATP = L-seryl-tRNA(Ser) + AMP + diphosphate + H(+). It carries out the reaction tRNA(Sec) + L-serine + ATP = L-seryl-tRNA(Sec) + AMP + diphosphate + H(+). Its pathway is aminoacyl-tRNA biosynthesis; selenocysteinyl-tRNA(Sec) biosynthesis; L-seryl-tRNA(Sec) from L-serine and tRNA(Sec): step 1/1. Its function is as follows. Catalyzes the attachment of serine to tRNA(Ser). Is also able to aminoacylate tRNA(Sec) with serine, to form the misacylated tRNA L-seryl-tRNA(Sec), which will be further converted into selenocysteinyl-tRNA(Sec). This is Serine--tRNA ligase from Roseiflexus castenholzii (strain DSM 13941 / HLO8).